Here is a 238-residue protein sequence, read N- to C-terminus: Citrate-binding protein (238 aa).

Positions 1 to 31 (MKMKRSPYCFCCSFALLLLVSFLKDRHFCSA) are cleaved as a signal peptide. Positions 225–238 (LEGCNNNHGTWLVQ) are cleaved as a propeptide — removed in mature form.

The protein resides in the vacuole. May be a subunit of a vacuolar malate and citrate transporter. The sequence is that of Citrate-binding protein (CBP) from Hevea brasiliensis (Para rubber tree).